Here is a 342-residue protein sequence, read N- to C-terminus: MGRTMLVLINTIQEQASEAIKQATDIVALEQIRVDFLGKKGKLTELLKGLANLSAEEKPKVGQLVNQAKQGISALIETKMIELKEKQLLAKLAAEQIDVTLPGRNHSTGSLHPVTQVKHRINDYFSRLGFDIVEGPEIETEFYNFEALNIPGHHPARAMHDTFYFGDGRLLRTHTSPVQIRTMEQRKPPFRLIAPGRVYRCDSDVTHTPMFHQVEGLLIDKQATLAGLKGLLQDFFAYFFGRELALRFRPSYFPFTEPSAEVDIECTQCNGKGCRSCKFTGWLEVLGCGMVHPNVLIAVNIDPNEYHGWAFGMGMDRLAMLYYGIDDLRMLFENDLTFLRQF.

Glu257 is a Mg(2+) binding site.

It belongs to the class-II aminoacyl-tRNA synthetase family. Phe-tRNA synthetase alpha subunit type 1 subfamily. In terms of assembly, tetramer of two alpha and two beta subunits. It depends on Mg(2+) as a cofactor.

The protein localises to the cytoplasm. It catalyses the reaction tRNA(Phe) + L-phenylalanine + ATP = L-phenylalanyl-tRNA(Phe) + AMP + diphosphate + H(+). This Legionella pneumophila subsp. pneumophila (strain Philadelphia 1 / ATCC 33152 / DSM 7513) protein is Phenylalanine--tRNA ligase alpha subunit.